Consider the following 506-residue polypeptide: Dolichyl pyrophosphate Glc1Man9GlcNAc2 alpha-1,3-glucosyltransferase (506 aa).

The next 12 membrane-spanning stretches (helical) occupy residues 10–30 (RLLLWFFAVATAVKLLLIPSS), 101–121 (VIYFQRISVIVSDLCLLYGVY), 133–153 (NLICALVIWSPGLLIVDHIHF), 176–196 (LLGGFLFAVLLCFKHLFAVTA), 219–239 (LVTIGAVVVAVFAAAYGPFIY), 261–281 (YWAPNFWVFYIILDKGLAVLL), 305–325 (PFAVLPQITPLTTFAMVLLAI), 339–359 (GLVARWVAYAYTCGFLFGWHV), 384–401 (HYFLVSIVSCYSLYPLLY), 406–426 (YPIKVLLLLLHSVVMWLGFAA), 454–474 (YLMGLIIVEIVSQFLHPYFLG), and 479–499 (FLPLMLISTYCTVGIMYSWIW).

Belongs to the ALG6/ALG8 glucosyltransferase family.

The protein localises to the endoplasmic reticulum membrane. It carries out the reaction an alpha-D-Glc-(1-&gt;3)-alpha-D-Man-(1-&gt;2)-alpha-D-Man-(1-&gt;2)-alpha-D-Man-(1-&gt;3)-[alpha-D-Man-(1-&gt;2)-alpha-D-Man-(1-&gt;3)-[alpha-D-Man-(1-&gt;2)-alpha-D-Man-(1-&gt;6)]-alpha-D-Man-(1-&gt;6)]-beta-D-Man-(1-&gt;4)-beta-D-GlcNAc-(1-&gt;4)-alpha-D-GlcNAc-diphospho-di-trans,poly-cis-dolichol + a di-trans,poly-cis-dolichyl beta-D-glucosyl phosphate = an alpha-D-Glc-(1-&gt;3)-alpha-D-Glc-(1-&gt;3)-alpha-D-Man-(1-&gt;2)-alpha-D-Man-(1-&gt;2)-alpha-D-Man-(1-&gt;3)-[alpha-D-Man-(1-&gt;2)-alpha-D-Man-(1-&gt;3)-[alpha-D-Man-(1-&gt;2)-alpha-D-Man-(1-&gt;6)]-alpha-D-Man-(1-&gt;6)]-beta-D-Man-(1-&gt;4)-beta-D-GlcNAc-(1-&gt;4)-alpha-D-GlcNAc-diphospho-di-trans,poly-cis-dolichol + a di-trans,poly-cis-dolichyl phosphate + H(+). Its pathway is protein modification; protein glycosylation. In terms of biological role, dolichyl pyrophosphate Glc1Man9GlcNAc2 alpha-1,3-glucosyltransferase that operates in the biosynthetic pathway of dolichol-linked oligosaccharides, the glycan precursors employed in protein asparagine (N)-glycosylation. The assembly of dolichol-linked oligosaccharides begins on the cytosolic side of the endoplasmic reticulum membrane and finishes in its lumen. The sequential addition of sugars to dolichol pyrophosphate produces dolichol-linked oligosaccharides containing fourteen sugars, including two GlcNAcs, nine mannoses and three glucoses. Once assembled, the oligosaccharide is transferred from the lipid to nascent proteins by oligosaccharyltransferases. In the lumen of the endoplasmic reticulum, adds the second glucose residue from dolichyl phosphate glucose (Dol-P-Glc) onto the lipid-linked oligosaccharide intermediate Glc(1)Man(9)GlcNAc(2)-PP-Dol to produce Glc(2)Man(9)GlcNAc(2)-PP-Dol. This Arabidopsis thaliana (Mouse-ear cress) protein is Dolichyl pyrophosphate Glc1Man9GlcNAc2 alpha-1,3-glucosyltransferase.